Reading from the N-terminus, the 769-residue chain is Major inner protein P1 (769 aa).

Homodimer. Associates with the polymerase complex.

It localises to the virion. In terms of biological role, P1 is the major inner capsid (core) protein of the polyhedral procapsid, which is responsible for genomic replication and transcription. Forms a dodecahedral shell from 60 asymmetric dimers. Binds to RNA and may be involved in genomic packaging. In Pseudomonas phage phi6 (Bacteriophage phi-6), this protein is Major inner protein P1 (P1).